The following is a 293-amino-acid chain: 4-hydroxybenzoate octaprenyltransferase (293 aa).

8 helical membrane-spanning segments follow: residues 26–46 (IGTL…AKGM), 49–69 (IKVL…GCII), 102–122 (LFAL…PLVV), 148–168 (FLGI…LGEV), 173–193 (WWLF…YAMI), 217–237 (WIAV…LSAE), 240–260 (FIYA…QRLI), and 272–292 (FLNN…DYLL).

The protein belongs to the UbiA prenyltransferase family. Requires Mg(2+) as cofactor.

It is found in the cell inner membrane. It carries out the reaction all-trans-octaprenyl diphosphate + 4-hydroxybenzoate = 4-hydroxy-3-(all-trans-octaprenyl)benzoate + diphosphate. The protein operates within cofactor biosynthesis; ubiquinone biosynthesis. In terms of biological role, catalyzes the prenylation of para-hydroxybenzoate (PHB) with an all-trans polyprenyl group. Mediates the second step in the final reaction sequence of ubiquinone-8 (UQ-8) biosynthesis, which is the condensation of the polyisoprenoid side chain with PHB, generating the first membrane-bound Q intermediate 3-octaprenyl-4-hydroxybenzoate. The sequence is that of 4-hydroxybenzoate octaprenyltransferase from Shewanella denitrificans (strain OS217 / ATCC BAA-1090 / DSM 15013).